The primary structure comprises 479 residues: UDP-N-acetylmuramate--L-alanine ligase (479 aa).

127-133 is an ATP binding site; it reads GTHGKTT.

The protein belongs to the MurCDEF family.

It is found in the cytoplasm. The enzyme catalyses UDP-N-acetyl-alpha-D-muramate + L-alanine + ATP = UDP-N-acetyl-alpha-D-muramoyl-L-alanine + ADP + phosphate + H(+). Its pathway is cell wall biogenesis; peptidoglycan biosynthesis. In terms of biological role, cell wall formation. The protein is UDP-N-acetylmuramate--L-alanine ligase of Shewanella denitrificans (strain OS217 / ATCC BAA-1090 / DSM 15013).